A 286-amino-acid polypeptide reads, in one-letter code: Tryptophan 2,3-dioxygenase (286 aa).

Substrate contacts are provided by residues 53–57 (FIVQH), Tyr115, and Arg119. His242 lines the heme pocket. Thr256 is a binding site for substrate.

The protein belongs to the tryptophan 2,3-dioxygenase family. Homotetramer. It depends on heme as a cofactor.

It carries out the reaction L-tryptophan + O2 = N-formyl-L-kynurenine. Its pathway is amino-acid degradation; L-tryptophan degradation via kynurenine pathway; L-kynurenine from L-tryptophan: step 1/2. Heme-dependent dioxygenase that catalyzes the oxidative cleavage of the L-tryptophan (L-Trp) pyrrole ring and converts L-tryptophan to N-formyl-L-kynurenine. Catalyzes the oxidative cleavage of the indole moiety. This is Tryptophan 2,3-dioxygenase from Kineococcus radiotolerans (strain ATCC BAA-149 / DSM 14245 / SRS30216).